Reading from the N-terminus, the 55-residue chain is uncharacterized protein (55 aa).

Residues 1-22 form a disordered region; sequence MPALKSHVRPNSAAPARRQPWP.

This is an uncharacterized protein from Rhodobacter capsulatus (Rhodopseudomonas capsulata).